The following is a 177-amino-acid chain: Large ribosomal subunit protein uL6 (177 aa).

Belongs to the universal ribosomal protein uL6 family. In terms of assembly, part of the 50S ribosomal subunit.

In terms of biological role, this protein binds to the 23S rRNA, and is important in its secondary structure. It is located near the subunit interface in the base of the L7/L12 stalk, and near the tRNA binding site of the peptidyltransferase center. The protein is Large ribosomal subunit protein uL6 of Photobacterium profundum (strain SS9).